The sequence spans 420 residues: Vasopressin V1a receptor (420 aa).

The interval 1–20 is disordered; the sequence is MSFPRGSYDPAASNSSPWWP. Residues 1–54 are Extracellular-facing; that stretch reads MSFPRGSYDPAASNSSPWWPLSAEDANSSWEAAGHQKGSDPSGDVRNEELAKLE. The N-linked (GlcNAc...) asparagine glycan is linked to N27. The chain crosses the membrane as a helical span at residues 55 to 75; the sequence is IAVLAVIFVVAVLGNSSVLLA. Residues 76–92 are Cytoplasmic-facing; that stretch reads LHRTPRKTSRMHLFIRH. A helical transmembrane segment spans residues 93–113; that stretch reads LSLADLAVAFFQVLPQLCWDI. The Extracellular segment spans residues 114–125; sequence TYRFRGPDWLCR. A disulfide bond links C124 and C205. The chain crosses the membrane as a helical span at residues 126–146; that stretch reads VVKHLQVFAMFASAYMLVVMT. Over 147–168 the chain is Cytoplasmic; that stretch reads ADRYIAVCHPLKTLQQPTRRSR. Residues 169–189 traverse the membrane as a helical segment; it reads LMIAASWVLSFLLSTPQYFIF. The Extracellular segment spans residues 190–225; it reads SMIEIEVNNGTKTQDCWATFIQPWGTRAYVTWMTSG. N-linked (GlcNAc...) asparagine glycosylation is present at N198. The chain crosses the membrane as a helical span at residues 226 to 246; it reads VFVVPVVILGTCYGFICYHIW. The Cytoplasmic portion of the chain corresponds to 247–294; sequence RNVRGKTASRQSKGSGEDVAPFHKGLLVTPCVSSVKTISRAKIRTVKM. A helical transmembrane segment spans residues 295 to 315; sequence TFVIVTAYILCWAPFFIVQMW. Residues 316–331 lie on the Extracellular side of the membrane; the sequence is SVWDDNFIWTDSENPS. The chain crosses the membrane as a helical span at residues 332–352; sequence ITITALLASLNSCCNPWIYMF. At 353–420 the chain is on the cytoplasmic side; it reads FSGHLLQDCV…RSIRFIPVST (68 aa). 2 S-palmitoyl cysteine lipidation sites follow: C367 and C368. The interval 379 to 411 is disordered; sequence DSDNMSRRHTSYSNNRSPTNSTGTWKDSPKSSR. Residues 389–403 are compositionally biased toward polar residues; it reads SYSNNRSPTNSTGTW. S406 is modified (phosphoserine).

It belongs to the G-protein coupled receptor 1 family. Vasopressin/oxytocin receptor subfamily.

It is found in the cell membrane. Its function is as follows. Receptor for arginine vasopressin. The activity of this receptor is mediated by G proteins which activate a phosphatidyl-inositol-calcium second messenger system. Involved in social memory formation. This is Vasopressin V1a receptor (Avpr1a) from Microtus ochrogaster (Prairie vole).